The primary structure comprises 543 residues: 2,3-bisphosphoglycerate-independent phosphoglycerate mutase (543 aa).

2 residues coordinate Mn(2+): Asp20 and Ser73. Ser73 functions as the Phosphoserine intermediate in the catalytic mechanism. Residues His134, 166–167, Arg198, Arg204, 278–281, and Lys360 each bind substrate; these read RD and RGDR. 5 residues coordinate Mn(2+): Asp428, His432, Asp469, His470, and His488.

It belongs to the BPG-independent phosphoglycerate mutase family. As to quaternary structure, monomer. Mn(2+) serves as cofactor.

The enzyme catalyses (2R)-2-phosphoglycerate = (2R)-3-phosphoglycerate. Its pathway is carbohydrate degradation; glycolysis; pyruvate from D-glyceraldehyde 3-phosphate: step 3/5. Catalyzes the interconversion of 2-phosphoglycerate and 3-phosphoglycerate. This is 2,3-bisphosphoglycerate-independent phosphoglycerate mutase from Rhodopirellula baltica (strain DSM 10527 / NCIMB 13988 / SH1).